The sequence spans 95 residues: Auxin-responsive protein SAUR27 (95 aa).

It belongs to the ARG7 family. Interacts with PP2C-D1. Higher expression in thermo-responsive cultivars (e.g. cv. Alst-1, cv. Ang-0 and cv. Com-0) than in low thermo-responsive cultivars (e.g. cv. Dja-1, cv. El-0 and cv. Kon).

Its subcellular location is the cell membrane. In terms of biological role, functions as a positive effector of cell expansion through modulation of auxin transport. Involved in thermo-responsiveness of plant architecture. Enhances plasma membrane H(+)-ATPase. The polypeptide is Auxin-responsive protein SAUR27 (Arabidopsis thaliana (Mouse-ear cress)).